The following is a 241-amino-acid chain: MGKRLISQRRGRGTPTYRSASHRFKGKIKYRAYDSIESEGSLKGKVVDIMHDPGRTAPVARVKFENGEERLILAPEALMLNEEVECGVKARVKPGNSLPLSEIPEGTPIYNIENRPGDGGKLVRSSGTYASLITHDADKAVIELPSGELKALNPQCRATVGVVAGGGRREKPFLKAGKKYHALRAKGKKSVTVRGVAMNAVDHPHGGGNRQHPGRPTTVSRHAPPGRKVGSIAARRTGKRR.

Basic residues predominate over residues 1–12 (MGKRLISQRRGR). 2 disordered regions span residues 1-21 (MGKR…RSAS) and 200-241 (AVDH…GKRR).

The protein belongs to the universal ribosomal protein uL2 family. In terms of assembly, part of the 50S ribosomal subunit. Forms a bridge to the 30S subunit in the 70S ribosome.

In terms of biological role, one of the primary rRNA binding proteins. Required for association of the 30S and 50S subunits to form the 70S ribosome, for tRNA binding and peptide bond formation. It has been suggested to have peptidyltransferase activity; this is somewhat controversial. Makes several contacts with the 16S rRNA in the 70S ribosome. This chain is Large ribosomal subunit protein uL2, found in Methanothermobacter thermautotrophicus (strain ATCC 29096 / DSM 1053 / JCM 10044 / NBRC 100330 / Delta H) (Methanobacterium thermoautotrophicum).